Reading from the N-terminus, the 111-residue chain is Large ribosomal subunit protein uL22 (111 aa).

This sequence belongs to the universal ribosomal protein uL22 family. As to quaternary structure, part of the 50S ribosomal subunit.

This protein binds specifically to 23S rRNA; its binding is stimulated by other ribosomal proteins, e.g. L4, L17, and L20. It is important during the early stages of 50S assembly. It makes multiple contacts with different domains of the 23S rRNA in the assembled 50S subunit and ribosome. In terms of biological role, the globular domain of the protein is located near the polypeptide exit tunnel on the outside of the subunit, while an extended beta-hairpin is found that lines the wall of the exit tunnel in the center of the 70S ribosome. In Clostridium beijerinckii (strain ATCC 51743 / NCIMB 8052) (Clostridium acetobutylicum), this protein is Large ribosomal subunit protein uL22.